Reading from the N-terminus, the 163-residue chain is ATP synthase subunit b, sodium ion specific (163 aa).

A helical transmembrane segment spans residues 9 to 29 (VSIDINMFWQIINFLILMFFF).

This sequence belongs to the ATPase B chain family. In terms of assembly, F-type ATPases have 2 components, F(1) - the catalytic core - and F(0) - the membrane proton channel. F(1) has five subunits: alpha(3), beta(3), gamma(1), delta(1), epsilon(1). F(0) has three main subunits: a(1), b(2) and c(10-14). The alpha and beta chains form an alternating ring which encloses part of the gamma chain. F(1) is attached to F(0) by a central stalk formed by the gamma and epsilon chains, while a peripheral stalk is formed by the delta and b chains.

The protein localises to the cell inner membrane. In terms of biological role, f(1)F(0) ATP synthase produces ATP from ADP in the presence of a proton or sodium gradient. F-type ATPases consist of two structural domains, F(1) containing the extramembraneous catalytic core and F(0) containing the membrane proton channel, linked together by a central stalk and a peripheral stalk. During catalysis, ATP synthesis in the catalytic domain of F(1) is coupled via a rotary mechanism of the central stalk subunits to proton translocation. Component of the F(0) channel, it forms part of the peripheral stalk, linking F(1) to F(0). This is ATP synthase subunit b, sodium ion specific (atpF) from Ilyobacter tartaricus.